The chain runs to 359 residues: S-adenosylmethionine:tRNA ribosyltransferase-isomerase (359 aa).

It belongs to the QueA family. Monomer.

It localises to the cytoplasm. It carries out the reaction 7-aminomethyl-7-carbaguanosine(34) in tRNA + S-adenosyl-L-methionine = epoxyqueuosine(34) in tRNA + adenine + L-methionine + 2 H(+). Its pathway is tRNA modification; tRNA-queuosine biosynthesis. Transfers and isomerizes the ribose moiety from AdoMet to the 7-aminomethyl group of 7-deazaguanine (preQ1-tRNA) to give epoxyqueuosine (oQ-tRNA). The sequence is that of S-adenosylmethionine:tRNA ribosyltransferase-isomerase from Colwellia psychrerythraea (strain 34H / ATCC BAA-681) (Vibrio psychroerythus).